Consider the following 805-residue polypeptide: Acetyl-CoA decarbonylase/synthase complex subunit alpha 2 (805 aa).

The [4Fe-4S] cluster site is built by cysteine 72, cysteine 75, cysteine 76, cysteine 78, cysteine 83, and cysteine 93. Residue histidine 116 participates in CO binding. 3 residues coordinate [Ni-4Fe-4S] cluster: histidine 249, cysteine 277, and cysteine 322. 4Fe-4S ferredoxin-type domains follow at residues glutamate 407–alanine 435 and glutamate 445–leucine 474. Positions 416, 419, 422, 426, 454, 457, 460, and 464 each coordinate [4Fe-4S] cluster. [Ni-4Fe-4S] cluster contacts are provided by cysteine 522, cysteine 551, and cysteine 586.

This sequence belongs to the Ni-containing carbon monoxide dehydrogenase family. Heterotetramer of two alpha and two epsilon subunits. The ACDS complex is made up of alpha, epsilon, beta, gamma and delta subunits with a probable stoichiometry of (alpha(2)epsilon(2))(4)-beta(8)-(gamma(1)delta(1))(8). The cofactor is [4Fe-4S] cluster. [Ni-4Fe-4S] cluster is required as a cofactor.

It carries out the reaction CO + 2 oxidized [2Fe-2S]-[ferredoxin] + H2O = 2 reduced [2Fe-2S]-[ferredoxin] + CO2 + 2 H(+). It functions in the pathway one-carbon metabolism; methanogenesis from acetate. Part of the ACDS complex that catalyzes the reversible cleavage of acetyl-CoA, allowing growth on acetate as sole source of carbon and energy. The alpha-epsilon subcomponent functions as a carbon monoxide dehydrogenase. The protein is Acetyl-CoA decarbonylase/synthase complex subunit alpha 2 of Methanosarcina acetivorans (strain ATCC 35395 / DSM 2834 / JCM 12185 / C2A).